The chain runs to 240 residues: MRGILITIEGINGVGKSTQAMRLKKALECMDYNAVCIRFPNPDTTTGGLILQVLNKMTEMSSEQLHKLFTKHHSEFSAEIAALLKLNFIVIVDHYIWSGLAYAQADGITIETKNIFKPDYTFFLSSKKPLNEKPLTLQRLFETKEKQETIFTNFTIIMNDVPKNRLCIIPATLNKEIIHTMILTKTIKVFDNNSCLNYIKMYDDKYLNVQDLNLFDFDWQKCIEDNNDKEEYDDDDGFII.

10-17 (GINGVGKS) lines the ATP pocket.

This sequence belongs to the thymidylate kinase family.

The enzyme catalyses dTMP + ATP = dTDP + ADP. It functions in the pathway pyrimidine metabolism; dTTP biosynthesis. Its function is as follows. Catalyzes the conversion of dTMP to dTDP. This is Thymidylate kinase (TMK) from African swine fever virus (strain Badajoz 1971 Vero-adapted) (Ba71V).